The chain runs to 341 residues: Ribosomal RNA small subunit methyltransferase H (341 aa).

Residues 47–49 (GGY), Asp-64, Phe-91, Asp-109, and Gln-116 each bind S-adenosyl-L-methionine.

This sequence belongs to the methyltransferase superfamily. RsmH family.

It localises to the cytoplasm. The enzyme catalyses cytidine(1402) in 16S rRNA + S-adenosyl-L-methionine = N(4)-methylcytidine(1402) in 16S rRNA + S-adenosyl-L-homocysteine + H(+). Functionally, specifically methylates the N4 position of cytidine in position 1402 (C1402) of 16S rRNA. This is Ribosomal RNA small subunit methyltransferase H from Rhizobium johnstonii (strain DSM 114642 / LMG 32736 / 3841) (Rhizobium leguminosarum bv. viciae).